Here is a 753-residue protein sequence, read N- to C-terminus: Polyribonucleotide nucleotidyltransferase (753 aa).

Mg(2+)-binding residues include Asp523 and Asp529. The 60-residue stretch at 589–648 (PRIISVRIPVDKIGAVIGPKGAMINQIQDDTGADITIEDDGTVLIGATDGASAEAARSAV) folds into the KH domain. The region spanning 660 to 732 (GERYLGTVVK…DRGKLSLSPV (73 aa)) is the S1 motif domain. Positions 733–753 (GAESDAVAETADAIESSQTEA) are disordered.

This sequence belongs to the polyribonucleotide nucleotidyltransferase family. Requires Mg(2+) as cofactor.

The protein localises to the cytoplasm. It carries out the reaction RNA(n+1) + phosphate = RNA(n) + a ribonucleoside 5'-diphosphate. Its function is as follows. Involved in mRNA degradation. Catalyzes the phosphorolysis of single-stranded polyribonucleotides processively in the 3'- to 5'-direction. This Micrococcus luteus (strain ATCC 4698 / DSM 20030 / JCM 1464 / CCM 169 / CCUG 5858 / IAM 1056 / NBRC 3333 / NCIMB 9278 / NCTC 2665 / VKM Ac-2230) (Micrococcus lysodeikticus) protein is Polyribonucleotide nucleotidyltransferase.